Here is a 295-residue protein sequence, read N- to C-terminus: Pyridoxal 5'-phosphate synthase subunit PdxS (295 aa).

Aspartate 25 provides a ligand contact to D-ribose 5-phosphate. Lysine 82 functions as the Schiff-base intermediate with D-ribose 5-phosphate in the catalytic mechanism. Glycine 154 is a binding site for D-ribose 5-phosphate. Arginine 166 contacts D-glyceraldehyde 3-phosphate. Residues glycine 215 and 236 to 237 (GS) each bind D-ribose 5-phosphate.

It belongs to the PdxS/SNZ family. In terms of assembly, in the presence of PdxT, forms a dodecamer of heterodimers.

The enzyme catalyses aldehydo-D-ribose 5-phosphate + D-glyceraldehyde 3-phosphate + L-glutamine = pyridoxal 5'-phosphate + L-glutamate + phosphate + 3 H2O + H(+). It participates in cofactor biosynthesis; pyridoxal 5'-phosphate biosynthesis. Functionally, catalyzes the formation of pyridoxal 5'-phosphate from ribose 5-phosphate (RBP), glyceraldehyde 3-phosphate (G3P) and ammonia. The ammonia is provided by the PdxT subunit. Can also use ribulose 5-phosphate and dihydroxyacetone phosphate as substrates, resulting from enzyme-catalyzed isomerization of RBP and G3P, respectively. The sequence is that of Pyridoxal 5'-phosphate synthase subunit PdxS from Bacillus cytotoxicus (strain DSM 22905 / CIP 110041 / 391-98 / NVH 391-98).